The primary structure comprises 236 residues: Virion protein US10 homolog (236 aa).

Positions 1–32 (MDGAYGHVHNGSPMAVDGEESGAGTGTGAGAD) are disordered. Residues 21 to 31 (SGAGTGTGAGA) show a composition bias toward gly residues. Residues 138-150 (CAYWCCLGHAFAC) fold into a zinc finger.

Belongs to the herpesviridae US10 family. In terms of processing, phosphorylated.

It is found in the virion tegument. The protein localises to the host nucleus matrix. This chain is Virion protein US10 homolog (IR5), found in Equine herpesvirus 1 (strain Kentucky A) (EHV-1).